We begin with the raw amino-acid sequence, 517 residues long: 2-isopropylmalate synthase (517 aa).

In terms of domain architecture, Pyruvate carboxyltransferase spans 5 to 268 (IIIFDTTLRD…DTRINTQEIH (264 aa)). 4 residues coordinate Mn(2+): D14, H202, H204, and N238. Positions 393 to 517 (SLDVITSQTI…ADLKSHKISQ (125 aa)) are regulatory domain.

This sequence belongs to the alpha-IPM synthase/homocitrate synthase family. LeuA type 1 subfamily. As to quaternary structure, homodimer. The cofactor is Mn(2+).

The protein localises to the cytoplasm. It catalyses the reaction 3-methyl-2-oxobutanoate + acetyl-CoA + H2O = (2S)-2-isopropylmalate + CoA + H(+). Its pathway is amino-acid biosynthesis; L-leucine biosynthesis; L-leucine from 3-methyl-2-oxobutanoate: step 1/4. Catalyzes the condensation of the acetyl group of acetyl-CoA with 3-methyl-2-oxobutanoate (2-ketoisovalerate) to form 3-carboxy-3-hydroxy-4-methylpentanoate (2-isopropylmalate). This Histophilus somni (strain 129Pt) (Haemophilus somnus) protein is 2-isopropylmalate synthase.